A 1342-amino-acid polypeptide reads, in one-letter code: MSDCNSGGGERRPNARATDAPPVRAPSGGAFRCRGCGACVILIAKYNPKTDEVTEFNASSCLTLLYSIHFCSIITTEGLGNTKDGFHAIQKRMSGFHASQCGFCTPGMCMSIFSSLVNADKSKKPDPPKGFSKLSVSEAERSFSGNMCRCTGYRPIVDACKSFASDVDLEDLGLNIFWKKGDKHPDPTKLPSYTLGGGICTFPDFLKSEIKSSIDFNDASISSPREGWYCPKNIKQYYKLVNSGLFSESSVKVVVGNTSTGVYKDQDLYDKYIDIAGIPELSAIVRKDKGIEIGAATSISRTIEILNQESESTSSPNGSVVFRKLAEHMSKVASPFVRNTASIGGNIILAHKYPFRSDIATILLGAAATVNLQVSSKTLHVTLEQFLEQPPLGHNTLLLSIFIPHWASDCKKEHTLVFETYRAAPRPLGNAVSYVNSAFLGHVSLDKSSGDNILSNLHLAFGAYGTEHAIRARKVEEYLTGKILSASVVLEAIRLLRETIVPVEGTTHPEYRVSVAVGFLFSFLSPLCKGVIEPGKTLSISEDLVHTDNVHNMPLSSRRETLSGDEYKPVGDPIKKYKVELQASGEAIYVDDIPAPKNCLYGEFIYSTQPLANVKSIKFKPSLASKKILTVVSAKDIPTGGRNIGSTFLFGDEEPLFGDPIAEFAGQALGVVIAETQRYADMAAKQAVVEYTTDGLKAPILTVEQAVQNNSYFQVPPERAPKQVGDFSKGMAEADHKIMSEEVKLASQYYFYMETQTALAIPDEDNTMTVYSSSQFPELAQNVISKCLGIPFNNVRVITRRAGGGFGGKAVRSLHIATAAALCAHTLRRPVRMYLNRNTDMIMVGGRHPMKARYSVGFKSDGKITALHLDLLINAGISADASPVIPGTIISGLKKYNWGALSFDVKLCKTNNTSKSVMRAPGDTQGSFIAEAIIEHVAAILSLDANTVRQKNFHTYDSLVLFYPDSAGESSTYTLHSIFDRLASTSRYLQRVESIKKFNSTNKWRKRGISSVPLIFKVEPRPAPGRVSVLNDGSIVVEVGGVELGQGLWTKVQQMTAFALGQLWPKGCEGLLDRIRVLQSDTLNLIQGGLTAGSTTSESSCAATLQACNMLIERLKPVMERLQLQSDTVSWDTLISQASQENINLSASAYWVPEQDSNFYLNYGAGTSEVEVDLLTGAITIIRSDLIYDCGKSLNPAVDLGQIEGSFIQGIGFFIYEEHQTNSDGLVISNSTWDYKIPSVDTIPKQFNAEVLNTGYHKHRVLSSKASGEPAVVLGASVHCAVREAIRAARIEFAGNNGSGSSLLTFQLDVPAPMTVVKELCGLDIVEKYLEDLSNRGAASGN.

A disordered region spans residues 1 to 23; that stretch reads MSDCNSGGGERRPNARATDAPPV. The region spanning 221-408 is the FAD-binding PCMH-type domain; it reads ISSPREGWYC…LSIFIPHWAS (188 aa).

The protein belongs to the xanthine dehydrogenase family.

The sequence is that of Putative aldehyde oxidase-like protein from Oryza sativa subsp. japonica (Rice).